A 130-amino-acid polypeptide reads, in one-letter code: Secreted cysteine-rich effector 2 (130 aa).

An N-terminal signal peptide occupies residues 1 to 23 (MLINAARLLLPAAALVHLSLAWA). The tract at residues 68-85 (LKNGEDWCKHCASPRVSV) is plant immunity suppression domain.

The protein localises to the secreted. It is found in the host cell. Its subcellular location is the host periplasm. Its function is as follows. Secreted effector required for full virulence of U.virens. Inhibits host pathogen-associated molecular pattern-triggered immunity including flg22- and chitin-induced defense gene expression and oxidative burst. The polypeptide is Secreted cysteine-rich effector 2 (Ustilaginoidea virens (Rice false smut fungus)).